Here is a 299-residue protein sequence, read N- to C-terminus: Protein FAM228A (299 aa).

The tract at residues A135–S201 is disordered. Residues K146 to K159 show a composition bias toward basic and acidic residues. S264 is subject to Phosphoserine.

It belongs to the FAM228 family.

This chain is Protein FAM228A (Fam228a), found in Mus musculus (Mouse).